Reading from the N-terminus, the 459-residue chain is MEAIEWLENFLLDFQGSIVFISHDRSVIRKMATRIVDLDRGQLQSYLGNYDLYLTTKEENLRVEALQNELFDKRLAQEDVWIRQGIKARRTRNEGRVRALKAMREERRQRREVMGTAKLQLDTSSRSGKIVFEMEDVSYEIAGKTLLKDFSTTILRGDKIALVGPNGCGKTTFIKLLLGEIQPTSGKIRCGTKLEIAYFDQYRADLDPEKIVMDNVADGKQDIEINGVKRHVLGYLQEFLFPPKRAMTPVKALSGGERNRLLLAKLLLKPNNLLILDEPTNDLDVETLELLEEILTDYQGTLLIVSHDRQFIDNTATECYLFEGEGRLNKYVGGFFDAKQQQANFWASKAVEEQAKAKKSEPLKEESAVKNDRTSKPKSVKLSYKEQRELEQLPQLLEELETKITTLQAEIADPAFFQQAHDITDAKLKALADTEAELETAFLRWEELEEKKNLADGKA.

Positions 132-350 (FEMEDVSYEI…QQANFWASKA (219 aa)) constitute an ABC transporter domain. 164-171 (GPNGCGKT) serves as a coordination point for ATP. A compositionally biased stretch (basic and acidic residues) spans 357–375 (AKKSEPLKEESAVKNDRTS). The disordered stretch occupies residues 357-381 (AKKSEPLKEESAVKNDRTSKPKSVK).

It belongs to the ABC transporter superfamily. ABCF family. Uup subfamily.

The protein resides in the cytoplasm. The catalysed reaction is ATP + H2O = ADP + phosphate + H(+). Functionally, might play a role in ribosome assembly or function; this is missing the first ABC transporter domain compared to paralogs. The sequence is that of ATP-binding protein Uup-like (uup-B) from Haemophilus influenzae (strain ATCC 51907 / DSM 11121 / KW20 / Rd).